An 888-amino-acid chain; its full sequence is Phosphoenolpyruvate carboxylase (888 aa).

Active-site residues include His144 and Lys553.

This sequence belongs to the PEPCase type 1 family. Requires Mg(2+) as cofactor.

It carries out the reaction oxaloacetate + phosphate = phosphoenolpyruvate + hydrogencarbonate. Its function is as follows. Forms oxaloacetate, a four-carbon dicarboxylic acid source for the tricarboxylic acid cycle. In Alcanivorax borkumensis (strain ATCC 700651 / DSM 11573 / NCIMB 13689 / SK2), this protein is Phosphoenolpyruvate carboxylase.